The primary structure comprises 282 residues: 4-diphosphocytidyl-2-C-methyl-D-erythritol kinase (282 aa).

Residue K11 is part of the active site. 93–103 is a binding site for ATP; that stretch reads LVSAGLAGGSA. The active site involves D133.

It belongs to the GHMP kinase family. IspE subfamily.

The enzyme catalyses 4-CDP-2-C-methyl-D-erythritol + ATP = 4-CDP-2-C-methyl-D-erythritol 2-phosphate + ADP + H(+). It participates in isoprenoid biosynthesis; isopentenyl diphosphate biosynthesis via DXP pathway; isopentenyl diphosphate from 1-deoxy-D-xylulose 5-phosphate: step 3/6. In terms of biological role, catalyzes the phosphorylation of the position 2 hydroxy group of 4-diphosphocytidyl-2C-methyl-D-erythritol. The sequence is that of 4-diphosphocytidyl-2-C-methyl-D-erythritol kinase from Ehrlichia canis (strain Jake).